The primary structure comprises 104 residues: L-rhamnose mutarotase (104 aa).

Y18 contacts substrate. H22 acts as the Proton donor in catalysis. Substrate-binding positions include Y41 and 76–77 (WW).

The protein belongs to the rhamnose mutarotase family. Homodimer.

The protein resides in the cytoplasm. It catalyses the reaction alpha-L-rhamnose = beta-L-rhamnose. Its pathway is carbohydrate metabolism; L-rhamnose metabolism. Involved in the anomeric conversion of L-rhamnose. In Shouchella clausii (strain KSM-K16) (Alkalihalobacillus clausii), this protein is L-rhamnose mutarotase.